A 239-amino-acid polypeptide reads, in one-letter code: MQKLELLYEGKAKRIYRTESADMVWVEYKDSATAFNGEKKETITGKGRLNNEITTLLFRKLQEVGIKTHFVEKLSETEQLVKKVSIIPLEVVTRNVLAGSLSKRLGMEEGTVLAEPIVEFYFKDDDLGDPLVTEDHIRVLNVASPEQVSVLRDMALQINQVLIDHFASCRVRLVDFKLEFGVTDEGAIILADEISPDTCRLWDETSNEKFDKDVFRRDLGNLTDAYEEILKRLGGISHV.

This sequence belongs to the SAICAR synthetase family.

It catalyses the reaction 5-amino-1-(5-phospho-D-ribosyl)imidazole-4-carboxylate + L-aspartate + ATP = (2S)-2-[5-amino-1-(5-phospho-beta-D-ribosyl)imidazole-4-carboxamido]succinate + ADP + phosphate + 2 H(+). It functions in the pathway purine metabolism; IMP biosynthesis via de novo pathway; 5-amino-1-(5-phospho-D-ribosyl)imidazole-4-carboxamide from 5-amino-1-(5-phospho-D-ribosyl)imidazole-4-carboxylate: step 1/2. This is Phosphoribosylaminoimidazole-succinocarboxamide synthase from Bacillus thuringiensis subsp. konkukian (strain 97-27).